The sequence spans 187 residues: NADH-quinone oxidoreductase subunit B (187 aa).

4 residues coordinate [4Fe-4S] cluster: cysteine 66, cysteine 67, cysteine 131, and cysteine 161.

It belongs to the complex I 20 kDa subunit family. As to quaternary structure, NDH-1 is composed of 14 different subunits. Subunits NuoB, C, D, E, F, and G constitute the peripheral sector of the complex. Requires [4Fe-4S] cluster as cofactor.

It is found in the cell inner membrane. The enzyme catalyses a quinone + NADH + 5 H(+)(in) = a quinol + NAD(+) + 4 H(+)(out). Its function is as follows. NDH-1 shuttles electrons from NADH, via FMN and iron-sulfur (Fe-S) centers, to quinones in the respiratory chain. Couples the redox reaction to proton translocation (for every two electrons transferred, four hydrogen ions are translocated across the cytoplasmic membrane), and thus conserves the redox energy in a proton gradient. This is NADH-quinone oxidoreductase subunit B from Rhizorhabdus wittichii (strain DSM 6014 / CCUG 31198 / JCM 15750 / NBRC 105917 / EY 4224 / RW1) (Sphingomonas wittichii).